Here is a 1128-residue protein sequence, read N- to C-terminus: Nck-associated protein 1 (1128 aa).

Position 2 is an N-acetylserine (Ser2). The interval 640-665 (AVNKKSKKQTGKKGEPEREKPGVESM) is disordered. Residues 651–665 (KKGEPEREKPGVESM) are compositionally biased toward basic and acidic residues. The chain crosses the membrane as a helical span at residues 995–1015 (IACLLMVFVAVSLPTLASNVM).

The protein belongs to the HEM-1/HEM-2 family. In terms of assembly, component of the WAVE1 complex composed of ABI2, CYFIP1 or CYFIP2, BRK1, NCKAP1 and WASF1/WAVE1. Within the complex, a heterodimer containing NCKAP1 and CYFIP1 interacts with a heterotrimer formed by WAVE1, ABI2 and BRK1. Component of the WAVE2 complex composed of ABI1, CYFIP1/SRA1, NCKAP1/NAP1 and WASF2/WAVE2. CYFIP2 binds to activated RAC1 which causes the complex to dissociate, releasing activated WASF1. The complex can also be activated by NCK1. Associates preferentially with the first SH3 domain of NCK. Interacts with NYAP1, NYAP2 and MYO16. Interacts with TMEM132D. As to expression, preferentially expressed in brain, heart, liver and testis.

Its subcellular location is the cell membrane. The protein localises to the cell projection. The protein resides in the lamellipodium membrane. Part of the WAVE complex that regulates lamellipodia formation. The WAVE complex regulates actin filament reorganization via its interaction with the Arp2/3 complex. Actin remodeling activity is regulated by RAC1. As component of the WAVE1 complex, required for BDNF-NTRK2 endocytic trafficking and signaling from early endosomes. The polypeptide is Nck-associated protein 1 (Nckap1) (Rattus norvegicus (Rat)).